The sequence spans 344 residues: Axoneme-associated protein mst101(1) (344 aa).

12 repeat units span residues lysine 74–glutamate 89, lysine 90–glutamate 105, lysine 106–glutamate 121, lysine 122–glutamate 137, lysine 138–glutamate 153, lysine 154–glutamate 169, lysine 170–leucine 185, alanine 186–alanine 201, alanine 202–arginine 217, alanine 218–arginine 233, alanine 234–alanine 249, and alanine 250–alanine 265. The 17 X 16 AA approximate tandem repeats of K-K-K-C-X-E-X-A-[KQ]-K-X-X-E-X-A-X stretch occupies residues lysine 74–lysine 344. The disordered stretch occupies residues lysine 206 to lysine 244. The stretch at alanine 266–alanine 281 is one 13; approximate repeat. A 14; approximate repeat occupies alanine 282–lysine 297. The span at lysine 285–asparagine 315 shows a compositional bias: basic and acidic residues. Positions lysine 285–alanine 318 are disordered. One copy of the 15; approximate repeat lies at glutamine 298–methionine 313. Copy 16 of the repeat occupies lysine 314 to leucine 329. The stretch at lysine 330–lysine 344 is one 17; truncated repeat.

Testis. Located in spermatocytes and spermatid bundles.

It localises to the cytoplasm. Functionally, possible structural role in the sperm tail. It is associated with axonemal structures. In Drosophila hydei (Fruit fly), this protein is Axoneme-associated protein mst101(1) (mst101(1)).